The following is a 389-amino-acid chain: Flap endonuclease 1 (389 aa).

The segment at 1 to 110 (MGIKGLMKLL…GELAKRSDRR (110 aa)) is N-domain. Residue Asp-35 participates in Mg(2+) binding. DNA is bound by residues Arg-48 and Arg-76. Position 92 (Asp-92) interacts with Mg(2+). Residues 103–124 (LAKRSDRRQEAQKALEEATEKG) form a disordered region. The I-domain stretch occupies residues 128–259 (DIDRFNKRLV…KKAYAGIKEH (132 aa)). Mg(2+)-binding residues include Glu-164, Glu-166, Asp-185, and Asp-187. Residue Glu-164 participates in DNA binding. 2 residues coordinate DNA: Gly-237 and Asp-239. A Mg(2+)-binding site is contributed by Asp-239. The tract at residues 350-358 (SQKRLDSFF) is interaction with PCNA. The segment at 362–389 (PSANGAKKRKAPAAKGGKKAATAKKGKK) is disordered. A compositionally biased stretch (basic residues) spans 367-389 (AKKRKAPAAKGGKKAATAKKGKK).

This sequence belongs to the XPG/RAD2 endonuclease family. FEN1 subfamily. Interacts with PCNA. Three molecules of FEN1 bind to one PCNA trimer with each molecule binding to one PCNA monomer. PCNA stimulates the nuclease activity without altering cleavage specificity. Requires Mg(2+) as cofactor. In terms of processing, phosphorylated. Phosphorylation upon DNA damage induces relocalization to the nuclear plasma.

The protein localises to the nucleus. Its subcellular location is the nucleolus. It localises to the nucleoplasm. The protein resides in the mitochondrion. Structure-specific nuclease with 5'-flap endonuclease and 5'-3' exonuclease activities involved in DNA replication and repair. During DNA replication, cleaves the 5'-overhanging flap structure that is generated by displacement synthesis when DNA polymerase encounters the 5'-end of a downstream Okazaki fragment. It enters the flap from the 5'-end and then tracks to cleave the flap base, leaving a nick for ligation. Also involved in the long patch base excision repair (LP-BER) pathway, by cleaving within the apurinic/apyrimidinic (AP) site-terminated flap. Acts as a genome stabilization factor that prevents flaps from equilibrating into structures that lead to duplications and deletions. Also possesses 5'-3' exonuclease activity on nicked or gapped double-stranded DNA, and exhibits RNase H activity. Also involved in replication and repair of rDNA and in repairing mitochondrial DNA. The sequence is that of Flap endonuclease 1 from Phytophthora infestans (strain T30-4) (Potato late blight agent).